Here is a 311-residue protein sequence, read N- to C-terminus: Methionyl-tRNA formyltransferase (311 aa).

110 to 113 (SLLP) provides a ligand contact to (6S)-5,6,7,8-tetrahydrofolate.

The protein belongs to the Fmt family.

It catalyses the reaction L-methionyl-tRNA(fMet) + (6R)-10-formyltetrahydrofolate = N-formyl-L-methionyl-tRNA(fMet) + (6S)-5,6,7,8-tetrahydrofolate + H(+). In terms of biological role, attaches a formyl group to the free amino group of methionyl-tRNA(fMet). The formyl group appears to play a dual role in the initiator identity of N-formylmethionyl-tRNA by promoting its recognition by IF2 and preventing the misappropriation of this tRNA by the elongation apparatus. This is Methionyl-tRNA formyltransferase from Streptococcus pyogenes serotype M3 (strain ATCC BAA-595 / MGAS315).